A 508-amino-acid chain; its full sequence is Early growth response protein 1 (508 aa).

Disordered regions lie at residues 18–78 (PQFL…ESFS) and 136–210 (MTNP…QYPP). A compositionally biased stretch (low complexity) spans 33–42 (NNSSSSSSSS). Gly residues predominate over residues 43–52 (SGGGGGGGSN). Residues 139 to 164 (PPTSSSSAPSPAASSSSSASQSPPLS) are compositionally biased toward low complexity. Lysine 278 is covalently cross-linked (Glycyl lysine isopeptide (Lys-Gly) (interchain with G-Cter in SUMO2)). Positions 292-311 (SRMRKYPNRPSKTPPHERPY) are disordered. 3 C2H2-type zinc fingers span residues 311–335 (YACP…IRIH), 341–363 (FQCR…IRTH), and 369–391 (FACD…TKIH). A disordered region spans residues 382-453 (DERKRHTKIH…SSTYPSPAHS (72 aa)). Basic residues predominate over residues 386 to 396 (RHTKIHLRQKD). The span at 402–450 (SVVASSAASSLSSYPSPVATSYPSPATTSFPSPVPTSYSSPGSSTYPSP) shows a compositional bias: low complexity. 7 repeat units span residues 413 to 420 (SSYPSPVA), 421 to 428 (TSYPSPAT), 429 to 436 (TSFPSPVP), 437 to 444 (TSYSSPGS), 445 to 452 (STYPSPAH), 453 to 460 (SGFPSPSV), and 462 to 468 (TTYASVP). Residues 413 to 468 (SSYPSPVATSYPSPATTSFPSPVPTSYSSPGSSTYPSPAHSGFPSPSVATTYASVP) form a 7 X 8 AA tandem repeats of [TS](2)-[FY]-[PS]-S-P-[GSAV]-X region.

Belongs to the EGR C2H2-type zinc-finger protein family. As to quaternary structure, interacts with SNAI1 and SP1 upon 12-O-tetradecanoylphorbol-13-acetate (TPA) induction. Detected in kidney thick ascending limbs and collecting ducts (at protein level).

The protein localises to the nucleus. It localises to the cytoplasm. Its function is as follows. Transcriptional regulator. Recognizes and binds to the DNA sequence 5'-GCG(T/G)GGGCG-3'(EGR-site) in the promoter region of target genes. Binds double-stranded target DNA, irrespective of the cytosine methylation status. Regulates the transcription of numerous target genes, and thereby plays an important role in regulating the response to growth factors, DNA damage, and ischemia. Plays a role in the regulation of cell survival, proliferation and cell death. Activates expression of p53/TP53 and TGFB1, and thereby helps prevent tumor formation. Required for normal progress through mitosis and normal proliferation of hepatocytes after partial hepatectomy. Mediates responses to ischemia and hypoxia; regulates the expression of proteins such as IL1B and CXCL2 that are involved in inflammatory processes and development of tissue damage after ischemia. Regulates biosynthesis of luteinizing hormone (LHB) in the pituitary. Regulates the amplitude of the expression rhythms of clock genes: BMAL1, PER2 and NR1D1 in the liver via the activation of PER1 (clock repressor) transcription. Regulates the rhythmic expression of core-clock gene BMAL1 in the suprachiasmatic nucleus (SCN). Regulates biosynthesis of glucocorticoid receptor GR/NR3C1 in the hippocampus and thereby may play a role in the behavioral and hypothalamic-pituitary-adrenal responses to stress in offspring. This chain is Early growth response protein 1 (Egr1), found in Rattus norvegicus (Rat).